The chain runs to 263 residues: Probable ABC transporter permease protein slr1045 (263 aa).

7 consecutive transmembrane segments (helical) span residues 12–32 (LWFQ…LHIL), 52–72 (SMAI…IQVA), 97–117 (APVL…AAEI), 140–162 (LVVP…SLFV), 167–186 (GLVI…LNSV), 192–212 (LWDV…IAII), and 234–254 (AVVT…WLMF).

Belongs to the MlaE permease family.

It is found in the cell membrane. Functionally, could be part of an ABC transporter complex. In Synechocystis sp. (strain ATCC 27184 / PCC 6803 / Kazusa), this protein is Probable ABC transporter permease protein slr1045.